The sequence spans 698 residues: Protein CRAC (698 aa).

Positions 22 to 122 (DVSYSSIMKK…FLTLLIARIR (101 aa)) constitute a PH domain. The tract at residues 594–630 (TGGGSVPSSQSTNNLQSSTSSMSSLSSSSTSTTKRSH) is disordered. Residues 601–626 (SSQSTNNLQSSTSSMSSLSSSSTSTT) show a composition bias toward low complexity.

The protein resides in the cytoplasm. In terms of biological role, couples activated G protein to adenylyl cyclase signal transduction from surface cAMP receptor. Pianissimo a cytosolic regulator and CRAC, are both essential for activation of the enzyme adenylyl cyclase. Pianissimo and CRAC do not function redundantly. Both proteins are integral components of the adenylyl cyclase activation pathway. The chain is Protein CRAC (dagA) from Dictyostelium discoideum (Social amoeba).